The sequence spans 182 residues: Ribosome maturation factor RimM (182 aa).

The PRC barrel domain maps to 103–182 (EDEFYWRELF…RIEVDWDPGF (80 aa)).

It belongs to the RimM family. In terms of assembly, binds ribosomal protein uS19.

It is found in the cytoplasm. In terms of biological role, an accessory protein needed during the final step in the assembly of 30S ribosomal subunit, possibly for assembly of the head region. Essential for efficient processing of 16S rRNA. May be needed both before and after RbfA during the maturation of 16S rRNA. It has affinity for free ribosomal 30S subunits but not for 70S ribosomes. In Vibrio campbellii (strain ATCC BAA-1116), this protein is Ribosome maturation factor RimM.